The following is a 398-amino-acid chain: Alpha-2,8-sialyltransferase 8F (398 aa).

At M1–P3 the chain is on the cytoplasmic side. Residues G4 to W24 traverse the membrane as a helical; Signal-anchor for type II membrane protein segment. The Lumenal segment spans residues C25 to A398. Residues N66, N93, N151, and N196 are each glycosylated (N-linked (GlcNAc...) asparagine). Intrachain disulfides connect C186–C335 and C200–C395. Residues N214, N236–S238, and S322–G324 each bind substrate. H370 (proton donor/acceptor) is an active-site residue.

This sequence belongs to the glycosyltransferase 29 family.

The protein resides in the golgi apparatus membrane. The catalysed reaction is a ganglioside GM3 + CMP-N-acetyl-beta-neuraminate = a ganglioside GD3 + CMP + H(+). It catalyses the reaction a ganglioside GM3 (d18:1(4E)) + CMP-N-acetyl-beta-neuraminate = a ganglioside GD3 (d18:1(4E)) + CMP + H(+). It carries out the reaction a ganglioside GD1a (d18:1(4E)) + CMP-N-acetyl-beta-neuraminate = a ganglioside GT1a (d18:1(4E)) + CMP + H(+). The enzyme catalyses a ganglioside GD1a + CMP-N-acetyl-beta-neuraminate = a ganglioside GT1a + CMP + H(+). The catalysed reaction is a ganglioside GM1b (d18:1(4E)) + CMP-N-acetyl-beta-neuraminate = a ganglioside GD1c (d18:1(4E)) + CMP + H(+). It catalyses the reaction a ganglioside GM1b + CMP-N-acetyl-beta-neuraminate = a ganglioside GD1c + CMP + H(+). It carries out the reaction a ganglioside GM4 (d18:1(4E)) + CMP-N-acetyl-beta-neuraminate = an N-acetyl-alpha-neuraminosyl-(2-&gt;8)-N-acetyl-alpha-neuraminosyl-(2-&gt;3)-beta-D-galactosyl-(1&lt;-&gt;1')-N-acylsphing-4-enine + CMP + H(+). The enzyme catalyses N-acetyl-alpha-neuraminosyl-(2-&gt;3)-beta-D-galactosyl-(1&lt;-&gt;1')-ceramide + CMP-N-acetyl-beta-neuraminate = N-acetyl-alpha-neuraminosyl-(2-&gt;8)-N-acetyl-alpha-neuraminosyl-(2-&gt;3)-beta-D-galactosyl-(1&lt;-&gt;1')-ceramide + CMP + H(+). The catalysed reaction is a ganglioside GT1b (d18:1(4E)) + CMP-N-acetyl-beta-neuraminate = a ganglioside GQ1b (d18:1(4E)) + CMP + H(+). It catalyses the reaction a ganglioside GT1b + CMP-N-acetyl-beta-neuraminate = a ganglioside GQ1b + CMP + H(+). It functions in the pathway protein modification; protein glycosylation. Its function is as follows. Alpha-2,8-sialyltransferase that prefers O-glycans to N-glycans or glycolipids as acceptor substrates. The minimal acceptor substrate is the NeuAc-alpha-2,3(6)-Gal sequence at the non-reducing end of their carbohydrate groups. The polypeptide is Alpha-2,8-sialyltransferase 8F (ST8SIA6) (Pan troglodytes (Chimpanzee)).